A 358-amino-acid polypeptide reads, in one-letter code: GTPase Obg (358 aa).

In terms of domain architecture, Obg spans 1-158; it reads MFVDNVDIYV…RHVRLELKLI (158 aa). The OBG-type G domain occupies 159–355; sequence ADVGLVGFPN…LKYLLHESVR (197 aa). GTP-binding positions include 165–172, 190–194, 212–215, 280–283, and 336–338; these read GFPNVGKS, FTTLI, DIPG, SKVD, and SSA. Positions 172 and 192 each coordinate Mg(2+).

The protein belongs to the TRAFAC class OBG-HflX-like GTPase superfamily. OBG GTPase family. Monomer. The cofactor is Mg(2+).

Its subcellular location is the cytoplasm. In terms of biological role, an essential GTPase which binds GTP, GDP and possibly (p)ppGpp with moderate affinity, with high nucleotide exchange rates and a fairly low GTP hydrolysis rate. Plays a role in control of the cell cycle, stress response, ribosome biogenesis and in those bacteria that undergo differentiation, in morphogenesis control. The protein is GTPase Obg of Wolinella succinogenes (strain ATCC 29543 / DSM 1740 / CCUG 13145 / JCM 31913 / LMG 7466 / NCTC 11488 / FDC 602W) (Vibrio succinogenes).